Reading from the N-terminus, the 386-residue chain is tRNA-specific adenosine deaminase subunit tad2 (386 aa).

In terms of domain architecture, CMP/dCMP-type deaminase spans 212–322 (TQHETYMKLA…GNDRFGGCGS (111 aa)). His-263 is a binding site for Zn(2+). The active-site Proton donor is the Glu-265. Zn(2+) is bound by residues Cys-293 and Cys-296.

Belongs to the cytidine and deoxycytidylate deaminase family. ADAT2 subfamily. As to quaternary structure, heterodimer with Tad3. Requires Zn(2+) as cofactor.

The catalysed reaction is adenosine(34) in tRNA + H2O + H(+) = inosine(34) in tRNA + NH4(+). Functionally, structural subunit of tRNA-specific adenosine deaminase, which deaminates adenosine-34 (the first, also called wobble position of the anticodon) to inosine in many tRNAs. Inosine-34 allows the decoding of 3 different nucleotides at the third position of mRNA codons, as inosine is able to pair with U, C, and A. The wobble inosine tRNA modification is essential for cell cycle progression in the G1/S and G2/M transitions in fission yeast. This chain is tRNA-specific adenosine deaminase subunit tad2 (tad2), found in Schizosaccharomyces pombe (strain 972 / ATCC 24843) (Fission yeast).